Here is a 211-residue protein sequence, read N- to C-terminus: SsrA-binding protein (211 aa).

Disordered regions lie at residues 1 to 20 (MHRR…PERS) and 170 to 211 (RLRR…RHEN). Over residues 177 to 187 (QRNTQRSVTPR) the composition is skewed to polar residues.

This sequence belongs to the SmpB family.

It localises to the cytoplasm. In terms of biological role, required for rescue of stalled ribosomes mediated by trans-translation. Binds to transfer-messenger RNA (tmRNA), required for stable association of tmRNA with ribosomes. tmRNA and SmpB together mimic tRNA shape, replacing the anticodon stem-loop with SmpB. tmRNA is encoded by the ssrA gene; the 2 termini fold to resemble tRNA(Ala) and it encodes a 'tag peptide', a short internal open reading frame. During trans-translation Ala-aminoacylated tmRNA acts like a tRNA, entering the A-site of stalled ribosomes, displacing the stalled mRNA. The ribosome then switches to translate the ORF on the tmRNA; the nascent peptide is terminated with the 'tag peptide' encoded by the tmRNA and targeted for degradation. The ribosome is freed to recommence translation, which seems to be the essential function of trans-translation. This Tropheryma whipplei (strain TW08/27) (Whipple's bacillus) protein is SsrA-binding protein.